A 303-amino-acid chain; its full sequence is Sulfate adenylyltransferase subunit 2 (303 aa).

This sequence belongs to the PAPS reductase family. CysD subfamily. As to quaternary structure, heterodimer composed of CysD, the smaller subunit, and CysN.

It carries out the reaction sulfate + ATP + H(+) = adenosine 5'-phosphosulfate + diphosphate. It functions in the pathway sulfur metabolism; hydrogen sulfide biosynthesis; sulfite from sulfate: step 1/3. With CysN forms the ATP sulfurylase (ATPS) that catalyzes the adenylation of sulfate producing adenosine 5'-phosphosulfate (APS) and diphosphate, the first enzymatic step in sulfur assimilation pathway. APS synthesis involves the formation of a high-energy phosphoric-sulfuric acid anhydride bond driven by GTP hydrolysis by CysN coupled to ATP hydrolysis by CysD. This Aliarcobacter butzleri (strain RM4018) (Arcobacter butzleri) protein is Sulfate adenylyltransferase subunit 2.